The chain runs to 105 residues: Replication restart protein PriB (105 aa).

The 102-residue stretch at 1–102 (MTANRLTLSG…LHAEQIELID (102 aa)) folds into the SSB domain.

Belongs to the PriB family. In terms of assembly, homodimer. Interacts with PriA and DnaT. Component of the replication restart primosome. Primosome assembly occurs via a 'hand-off' mechanism. PriA binds to replication forks, subsequently PriB then DnaT bind; DnaT then displaces ssDNA to generate the helicase loading substrate.

Functionally, involved in the restart of stalled replication forks, which reloads the replicative helicase on sites other than the origin of replication; the PriA-PriB pathway is the major replication restart pathway. During primosome assembly it facilitates complex formation between PriA and DnaT on DNA; stabilizes PriA on DNA. Stimulates the DNA unwinding activity of PriA helicase. This chain is Replication restart protein PriB, found in Erwinia tasmaniensis (strain DSM 17950 / CFBP 7177 / CIP 109463 / NCPPB 4357 / Et1/99).